The chain runs to 394 residues: RILP-like protein 1 (394 aa).

The RH1 domain occupies E2–K89. A coiled-coil region spans residues E68–A312. One can recognise an RH2 domain in the interval R282 to L347. The tract at residues E318–P337 is disordered.

The protein belongs to the RILPL family.

The protein resides in the cytoplasm. Its subcellular location is the cytosol. It localises to the cytoskeleton. The protein localises to the microtubule organizing center. It is found in the centrosome. The protein resides in the cell projection. Its subcellular location is the cilium. In terms of biological role, plays a role in the regulation of cell shape and polarity. Plays a role in cellular protein transport, including protein transport away from primary cilia. Neuroprotective protein. The sequence is that of RILP-like protein 1 (rilpl1) from Xenopus tropicalis (Western clawed frog).